A 114-amino-acid polypeptide reads, in one-letter code: Large ribosomal subunit protein uL18 (114 aa).

Belongs to the universal ribosomal protein uL18 family. In terms of assembly, part of the 50S ribosomal subunit; part of the 5S rRNA/L5/L18/L25 subcomplex. Contacts the 5S and 23S rRNAs.

Functionally, this is one of the proteins that bind and probably mediate the attachment of the 5S RNA into the large ribosomal subunit, where it forms part of the central protuberance. In Parabacteroides distasonis (strain ATCC 8503 / DSM 20701 / CIP 104284 / JCM 5825 / NCTC 11152), this protein is Large ribosomal subunit protein uL18.